Consider the following 206-residue polypeptide: MADQQLDYASAKFVTSAPDISKLPPDSGIEVAFAGRSNAGKSSALNTLTRQKALARTSKTPGRTQLINVFELTTGQRLIDLPGYGFAKVPLAVKEKWQRSLSEYLQQRDSLKGIVVLMDIRHPFRETDQELIYWAVDCDLPVLALLTKADKLKQGARKSTVLKAKQAAIAFNGDVQVEAFSSLKRIGVEQVEEKLNQWYSKEYDDE.

Residues 27-201 enclose the EngB-type G domain; sequence SGIEVAFAGR…EEKLNQWYSK (175 aa). GTP is bound by residues 35–42, 62–66, 80–83, 147–150, and 180–182; these read GRSNAGKS, GRTQL, DLPG, TKAD, and FSS. Residues S42 and T64 each coordinate Mg(2+).

The protein belongs to the TRAFAC class TrmE-Era-EngA-EngB-Septin-like GTPase superfamily. EngB GTPase family. It depends on Mg(2+) as a cofactor.

In terms of biological role, necessary for normal cell division and for the maintenance of normal septation. The chain is Probable GTP-binding protein EngB from Idiomarina loihiensis (strain ATCC BAA-735 / DSM 15497 / L2-TR).